The chain runs to 116 residues: Large ribosomal subunit protein uL18 (116 aa).

Belongs to the universal ribosomal protein uL18 family. In terms of assembly, part of the 50S ribosomal subunit; part of the 5S rRNA/L5/L18/L25 subcomplex. Contacts the 5S and 23S rRNAs.

Functionally, this is one of the proteins that bind and probably mediate the attachment of the 5S RNA into the large ribosomal subunit, where it forms part of the central protuberance. The chain is Large ribosomal subunit protein uL18 from Psychromonas ingrahamii (strain DSM 17664 / CCUG 51855 / 37).